A 421-amino-acid polypeptide reads, in one-letter code: Subtilisin-like protease 2 (421 aa).

An N-terminal signal peptide occupies residues 1 to 16 (MQLLNFGLLLLPFVAG). A propeptide spanning residues 17-122 (DLAPQPEPLL…VHPDQHVYLA (106 aa)) is cleaved from the precursor. In terms of domain architecture, Inhibitor I9 spans 36–122 (QYIVTLKEGL…VHPDQHVYLA (87 aa)). The 291-residue stretch at 131-421 (RWGLGYMSSK…ERKFTLPKYF (291 aa)) folds into the Peptidase S8 domain. Catalysis depends on charge relay system residues aspartate 169 and histidine 201. Asparagine 248, asparagine 261, and asparagine 348 each carry an N-linked (GlcNAc...) asparagine glycan. Serine 357 functions as the Charge relay system in the catalytic mechanism. Asparagine 388 carries an N-linked (GlcNAc...) asparagine glycan.

It belongs to the peptidase S8 family.

It is found in the secreted. Its function is as follows. Secreted subtilisin-like serine protease with keratinolytic activity that contributes to pathogenicity. The polypeptide is Subtilisin-like protease 2 (SUB2) (Trichophyton tonsurans (Scalp ringworm fungus)).